Reading from the N-terminus, the 476-residue chain is Ribulose bisphosphate carboxylase large chain (476 aa).

Residues 1–2 (MS) constitute a propeptide that is removed on maturation. At P3 the chain carries N-acetylproline. K14 carries the post-translational modification N6,N6,N6-trimethyllysine. Substrate-binding residues include N123 and T173. The Proton acceptor role is filled by K175. Position 177 (K177) interacts with substrate. 3 residues coordinate Mg(2+): K201, D203, and E204. Position 201 is an N6-carboxylysine (K201). The active-site Proton acceptor is the H294. 3 residues coordinate substrate: R295, H327, and S379.

It belongs to the RuBisCO large chain family. Type I subfamily. As to quaternary structure, heterohexadecamer of 8 large chains and 8 small chains; disulfide-linked. The disulfide link is formed within the large subunit homodimers. Requires Mg(2+) as cofactor. Post-translationally, the disulfide bond which can form in the large chain dimeric partners within the hexadecamer appears to be associated with oxidative stress and protein turnover.

It localises to the plastid. It is found in the chloroplast. The enzyme catalyses 2 (2R)-3-phosphoglycerate + 2 H(+) = D-ribulose 1,5-bisphosphate + CO2 + H2O. It carries out the reaction D-ribulose 1,5-bisphosphate + O2 = 2-phosphoglycolate + (2R)-3-phosphoglycerate + 2 H(+). Functionally, ruBisCO catalyzes two reactions: the carboxylation of D-ribulose 1,5-bisphosphate, the primary event in carbon dioxide fixation, as well as the oxidative fragmentation of the pentose substrate in the photorespiration process. Both reactions occur simultaneously and in competition at the same active site. This Zea mays (Maize) protein is Ribulose bisphosphate carboxylase large chain.